The primary structure comprises 86 residues: MSDSTSETVKKAIIKQVLIESQSANARTLMEKIGENCFTSCVPKPGSSLSNSEKTCVTQCTEKYMAAWNVVNTTYLRRIQQEMGNQ.

Positions 37 to 60 match the Twin CX3C motif motif; that stretch reads CFTSCVPKPGSSLSNSEKTCVTQC. Disulfide bonds link C37–C60 and C41–C56.

It belongs to the small Tim family. As to quaternary structure, heterohexamer; composed of 3 copies of tim8 and 3 copies of tim13, named soluble 70 kDa complex. Associates with the TIM22 complex, whose core is composed of tim22 and tim54. Interacts with the transmembrane regions of multi-pass transmembrane proteins in transit.

The protein resides in the mitochondrion inner membrane. Functionally, mitochondrial intermembrane chaperone that participates in the import and insertion of some multi-pass transmembrane proteins into the mitochondrial inner membrane. Also required for the transfer of beta-barrel precursors from the TOM complex to the sorting and assembly machinery (SAM complex) of the outer membrane. Acts as a chaperone-like protein that protects the hydrophobic precursors from aggregation and guide them through the mitochondrial intermembrane space. The tim8-tim13 complex is non essential and only mediates the import of few proteins, while the predominant tim9-tim10 70 kDa complex is crucial and mediates the import of much more proteins. This Neurospora crassa (strain ATCC 24698 / 74-OR23-1A / CBS 708.71 / DSM 1257 / FGSC 987) protein is Mitochondrial import inner membrane translocase subunit tim13 (tim13).